Reading from the N-terminus, the 865-residue chain is Armadillo repeat-containing protein 2 (865 aa).

Disordered stretches follow at residues 39-75 (TVRT…FSVH) and 214-243 (SVPF…DQSR). Residues 60-75 (SSRTPENRPPSSFSVH) are compositionally biased toward polar residues. ARM repeat units lie at residues 261 to 300 (IEVD…HALE), 303 to 343 (NMLG…ALKV), 362 to 402 (EKND…TIKF), 407 to 448 (PEFL…HLLV), 461 to 502 (PLAR…KLTS), 505 to 546 (DCCV…NLTA), 550 to 587 (QARE…GEGD), 589 to 614 (RPEA…NLAI), 617 to 660 (GVGP…NLSY), 662 to 703 (KVKN…NLSQ), 705 to 744 (HDIC…NLTV), and 746 to 788 (RDKR…NFSE).

Functionally, required for sperm flagellum axoneme organization and function. Involved in axonemal central pair complex assembly and/or stability. This chain is Armadillo repeat-containing protein 2, found in Bos taurus (Bovine).